The following is a 77-amino-acid chain: UPF0401 protein c0279 (77 aa).

Belongs to the UPF0401 family.

The protein is UPF0401 protein c0279 of Escherichia coli O6:H1 (strain CFT073 / ATCC 700928 / UPEC).